We begin with the raw amino-acid sequence, 191 residues long: dCTP deaminase (191 aa).

Residues 112–117 (KSTYAR), 136–138 (TLE), Gln157, Tyr173, and Gln183 each bind dCTP. Glu138 serves as the catalytic Proton donor/acceptor.

The protein belongs to the dCTP deaminase family. In terms of assembly, homotrimer.

The enzyme catalyses dCTP + H2O + H(+) = dUTP + NH4(+). The protein operates within pyrimidine metabolism; dUMP biosynthesis; dUMP from dCTP (dUTP route): step 1/2. Catalyzes the deamination of dCTP to dUTP. The polypeptide is dCTP deaminase (Xylella fastidiosa (strain M12)).